Consider the following 347-residue polypeptide: MIPATCTLSQITARLGGEWRGEDISVTAVRPLADAQAEHISFLANPKYKAEVHDSSAGAIIVSAKAADGFEGRNLIVADDPYLYFAKVARLFSPVVKARGGIHPTAVVEPGATVPASCEIGANAYIGANTVLGEGCRILANAVVQHDCKLGDEVVLHPNAVVYYGCTLGRHVEIHSGAVIGADGFGLAFAGDSWFKIPQTGAVTLGDDVEIGSNTNIDRGAMSDTIVGNGTKIDNQVQIGHNCKIGSHTVIAAKTGISGSVTIGSYCIIGGGVGTVGHIEIADKTTIGGGTSVTHSITESGKHIAGIFPMSTHKEWARNAVYIHRLSEMNKRLKTLEQQLSDSKDTQ.

His241 acts as the Proton acceptor in catalysis.

This sequence belongs to the transferase hexapeptide repeat family. LpxD subfamily. As to quaternary structure, homotrimer.

It carries out the reaction a UDP-3-O-[(3R)-3-hydroxyacyl]-alpha-D-glucosamine + a (3R)-hydroxyacyl-[ACP] = a UDP-2-N,3-O-bis[(3R)-3-hydroxyacyl]-alpha-D-glucosamine + holo-[ACP] + H(+). Its pathway is bacterial outer membrane biogenesis; LPS lipid A biosynthesis. Its function is as follows. Catalyzes the N-acylation of UDP-3-O-acylglucosamine using 3-hydroxyacyl-ACP as the acyl donor. Is involved in the biosynthesis of lipid A, a phosphorylated glycolipid that anchors the lipopolysaccharide to the outer membrane of the cell. The protein is UDP-3-O-acylglucosamine N-acyltransferase of Neisseria gonorrhoeae (strain NCCP11945).